The following is a 357-amino-acid chain: Anthranilate phosphoribosyltransferase (357 aa).

Residues G91, 94–95 (GD), T99, 101–104 (NIST), 119–127 (KHGNRSVSS), and S131 each bind 5-phospho-alpha-D-ribose 1-diphosphate. G91 provides a ligand contact to anthranilate. S103 contacts Mg(2+). Anthranilate is bound at residue N122. An anthranilate-binding site is contributed by R177. Mg(2+) is bound by residues D235 and E236.

This sequence belongs to the anthranilate phosphoribosyltransferase family. Homodimer. Mg(2+) is required as a cofactor.

It catalyses the reaction N-(5-phospho-beta-D-ribosyl)anthranilate + diphosphate = 5-phospho-alpha-D-ribose 1-diphosphate + anthranilate. The protein operates within amino-acid biosynthesis; L-tryptophan biosynthesis; L-tryptophan from chorismate: step 2/5. Its function is as follows. Catalyzes the transfer of the phosphoribosyl group of 5-phosphorylribose-1-pyrophosphate (PRPP) to anthranilate to yield N-(5'-phosphoribosyl)-anthranilate (PRA). This is Anthranilate phosphoribosyltransferase from Shewanella baltica (strain OS195).